The following is a 237-amino-acid chain: Phosphoribosylaminoimidazole-succinocarboxamide synthase (237 aa).

It belongs to the SAICAR synthetase family.

The enzyme catalyses 5-amino-1-(5-phospho-D-ribosyl)imidazole-4-carboxylate + L-aspartate + ATP = (2S)-2-[5-amino-1-(5-phospho-beta-D-ribosyl)imidazole-4-carboxamido]succinate + ADP + phosphate + 2 H(+). It participates in purine metabolism; IMP biosynthesis via de novo pathway; 5-amino-1-(5-phospho-D-ribosyl)imidazole-4-carboxamide from 5-amino-1-(5-phospho-D-ribosyl)imidazole-4-carboxylate: step 1/2. The chain is Phosphoribosylaminoimidazole-succinocarboxamide synthase from Cronobacter sakazakii (strain ATCC BAA-894) (Enterobacter sakazakii).